An 83-amino-acid chain; its full sequence is Beta-toxin Ct25 (83 aa).

The first 18 residues, 1 to 18 (MKVLILIIASVLLIGVEC), serve as a signal peptide directing secretion. The region spanning 19 to 81 (KDGYPKNSEG…VWDSATNKCG (63 aa)) is the LCN-type CS-alpha/beta domain. 4 disulfide bridges follow: C29–C80, C33–C54, C40–C61, and C44–C63. G81 carries the post-translational modification Glycine amide.

The protein belongs to the long (4 C-C) scorpion toxin superfamily. Sodium channel inhibitor family. Beta subfamily. As to expression, expressed by the venom gland.

It is found in the secreted. Functionally, beta toxins bind voltage-independently at site-4 of sodium channels (Nav) and shift the voltage of activation toward more negative potentials thereby affecting sodium channel activation and promoting spontaneous and repetitive firing. In Centruroides tecomanus (Scorpion), this protein is Beta-toxin Ct25.